Here is a 315-residue protein sequence, read N- to C-terminus: MHRVRKTNYFYFDNTRLDLADEDFEYFKQLLIDNNIDELCQEMCNKNKVDCFISYLVVIDDLDNFILITDRTDTYIHSNECRYFRMAVYNNSYDIAKYLLENGANVHVCNSYAITCASGFGKFYVFHSEKKEKRDTVELVKLLIDYNAMVGTDTCNLVHTAIDANRLDVVKILVENGADIFSNQSKLLKSAVMYNYDILEYLISQGIDVTDDNNSVLKFAVSRGYDCVDLLLDAGADMNTLRREDVSKAILMKGSEIIETLNNNGYDFECLNGFSNTIIDTHTSKIINILNNRVSMTDVASILLYNSKYDDNYRK.

5 ANK repeats span residues 79 to 108 (NECRYFRMAVYNNSYDIAKYLLENGANVHV), 118 to 152 (SGFGKFYVFHSEKKEKRDTVELVKLLIDYNAMVGT), 153 to 182 (DTCNLVHTAIDANRLDVVKILVENGADIFS), 184 to 211 (QSKLLKSAVMYNYDILEYLISQGIDVTD), and 212 to 240 (DNNSVLKFAVSRGYDCVDLLLDAGADMNT).

The chain is Putative ankyrin repeat protein R600 from Acanthamoeba polyphaga mimivirus (APMV).